The following is a 357-amino-acid chain: DNA replication and repair protein RecF (357 aa).

30 to 37 serves as a coordination point for ATP; the sequence is GANGSGKT.

It belongs to the RecF family.

The protein resides in the cytoplasm. The RecF protein is involved in DNA metabolism; it is required for DNA replication and normal SOS inducibility. RecF binds preferentially to single-stranded, linear DNA. It also seems to bind ATP. The sequence is that of DNA replication and repair protein RecF from Escherichia fergusonii (strain ATCC 35469 / DSM 13698 / CCUG 18766 / IAM 14443 / JCM 21226 / LMG 7866 / NBRC 102419 / NCTC 12128 / CDC 0568-73).